The chain runs to 283 residues: Phosphatidylglycerol--prolipoprotein diacylglyceryl transferase (283 aa).

Transmembrane regions (helical) follow at residues 18–38, 62–82, 106–126, 136–156, 190–210, 218–238, and 252–272; these read LGGIEVHWYGLAYACAIVVAF, YFLWAELGIVLGARIGYVLIY, FIGIRGMSYHGGLVGFLIASY, LLIYLDLIAISLPLGYVFGRI, PSQLIEAFLEGVVVFLMVMWA, GLLIVVYGLGYSLMRFIAEFY, and LSMGQILSVFMVIVSLGILLY. Residue Arg155 participates in a 1,2-diacyl-sn-glycero-3-phospho-(1'-sn-glycerol) binding.

It belongs to the Lgt family.

The protein localises to the cell inner membrane. The enzyme catalyses L-cysteinyl-[prolipoprotein] + a 1,2-diacyl-sn-glycero-3-phospho-(1'-sn-glycerol) = an S-1,2-diacyl-sn-glyceryl-L-cysteinyl-[prolipoprotein] + sn-glycerol 1-phosphate + H(+). The protein operates within protein modification; lipoprotein biosynthesis (diacylglyceryl transfer). Its function is as follows. Catalyzes the transfer of the diacylglyceryl group from phosphatidylglycerol to the sulfhydryl group of the N-terminal cysteine of a prolipoprotein, the first step in the formation of mature lipoproteins. The polypeptide is Phosphatidylglycerol--prolipoprotein diacylglyceryl transferase (Helicobacter pylori (strain J99 / ATCC 700824) (Campylobacter pylori J99)).